The sequence spans 711 residues: Amino-acid racemase (711 aa).

The Cytoplasmic segment spans residues 1–14; the sequence is MTKNESYSGIDYFR. The chain crosses the membrane as a helical span at residues 15 to 35; the sequence is FIAALLIVAIHTSPLFSFSET. Residues 36 to 37 are Extracellular-facing; that stretch reads GN. Residues 38–58 form a helical membrane-spanning segment; it reads FIFTRIVAPVAVPFFFMTSGF. The Cytoplasmic portion of the chain corresponds to 59-78; that stretch reads FLISRYTCNAEKLGAFIKKT. A helical transmembrane segment spans residues 79–99; it reads TLIYGVAILLYIPINVYNGYF. Residues 100–117 are Extracellular-facing; the sequence is KMDNLLPNIIKDIVFDGT. The helical transmembrane segment at 118-138 threads the bilayer; the sequence is LYHLWYLPASIIGAAIAWYLV. Over 139 to 146 the chain is Cytoplasmic; it reads KKVHYRKA. Residues 147–167 form a helical membrane-spanning segment; the sequence is FLIASILYIIGLFGDSYYGIV. The Extracellular segment spans residues 168 to 188; it reads KSVSCLNVFYNLIFQLTDYTR. A helical transmembrane segment spans residues 189–209; that stretch reads NGIFFAPIFFVLGGYISDSPN. Topologically, residues 210-241 are cytoplasmic; sequence RYRKKNYIRIYSLFCLMFGKTLTLQHFDIQKH. A helical transmembrane segment spans residues 242–262; the sequence is DSMYVLLLPSVWCLFNLLLHF. Topologically, residues 263–306 are extracellular; it reads RGKRRTGLRTISLDQLYHSSVYDCCNTIVCAELLHLQSLLVENS. A helical membrane pass occupies residues 307–327; sequence LVHYIAVCFASVVLAVVITAL. Over 328–711 the chain is Cytoplasmic; sequence LSSLKPKKAK…EHRLNIIRRA (384 aa). The racemase stretch occupies residues 336–711; sequence AKHTADTDRA…EHRLNIIRRA (376 aa). Catalysis depends on Lys-376, which acts as the Proton acceptor. An N6-(pyridoxal phosphate)lysine modification is found at Lys-376. Arg-470 lines the substrate pocket. Residue Tyr-602 is the Proton acceptor of the active site. A substrate-binding site is contributed by Met-651.

The protein in the N-terminal section; belongs to the acyltransferase 3 family. In the C-terminal section; belongs to the alanine racemase family. The cofactor is pyridoxal 5'-phosphate.

The protein localises to the cell membrane. In Enterococcus faecalis (Streptococcus faecalis), this protein is Amino-acid racemase (vanTG).